The following is a 204-amino-acid chain: Protease (204 aa).

Catalysis depends on residues H54, D71, and C122.

This sequence belongs to the peptidase C5 family. As to quaternary structure, interacts with protease cofactor pVI-C; this interaction is necessary for protease activation.

It is found in the virion. Its subcellular location is the host nucleus. It carries out the reaction Cleaves proteins of the adenovirus and its host cell at two consensus sites: -Yaa-Xaa-Gly-Gly-|-Xaa- and -Yaa-Xaa-Gly-Xaa-|-Gly- (in which Yaa is Met, Ile or Leu, and Xaa is any amino acid).. Its activity is regulated as follows. Requires DNA and protease cofactor for maximal activation. Inside nascent virions, becomes partially activated by binding to the viral DNA, allowing it to cleave the cofactor that binds to the protease and fully activates it. Actin, like the viral protease cofactor, seems to act as a cofactor in the cleavage of cytokeratin 18 and of actin itself. In terms of biological role, cleaves viral precursor proteins (pTP, pIIIa, pVI, pVII, pVIII, and pX) inside newly assembled particles giving rise to mature virions. Protease complexed to its cofactor slides along the viral DNA to specifically locate and cleave the viral precursors. Mature virions have a weakened organization compared to the unmature virions, thereby facilitating subsequent uncoating. Without maturation, the particle lacks infectivity and is unable to uncoat. Late in adenovirus infection, in the cytoplasm, may participate in the cytoskeleton destruction. Cleaves host cell cytoskeletal keratins K7 and K18. In Bos taurus (Bovine), this protein is Protease.